Here is an 896-residue protein sequence, read N- to C-terminus: Alanine--tRNA ligase (896 aa).

Zn(2+) contacts are provided by His-581, His-585, Cys-684, and His-688.

It belongs to the class-II aminoacyl-tRNA synthetase family. Zn(2+) is required as a cofactor.

The protein resides in the cytoplasm. The catalysed reaction is tRNA(Ala) + L-alanine + ATP = L-alanyl-tRNA(Ala) + AMP + diphosphate. Its function is as follows. Catalyzes the attachment of alanine to tRNA(Ala) in a two-step reaction: alanine is first activated by ATP to form Ala-AMP and then transferred to the acceptor end of tRNA(Ala). Also edits incorrectly charged Ser-tRNA(Ala) and Gly-tRNA(Ala) via its editing domain. The sequence is that of Alanine--tRNA ligase from Renibacterium salmoninarum (strain ATCC 33209 / DSM 20767 / JCM 11484 / NBRC 15589 / NCIMB 2235).